A 193-amino-acid polypeptide reads, in one-letter code: Cysteine and glycine-rich protein 1 (193 aa).

The 52-residue stretch at 10–61 (CGVCQKTVYFAEEVQCEGNSFHKSCFLCMVCKKNLDSTTVAVHGEEIYCKSC) folds into the LIM zinc-binding 1 domain. The Nuclear localization signal signature appears at 64–69 (KKYGPK). Position 81 is a phosphoserine (serine 81). Lysine 84 is modified (N6-acetyllysine). Lysine 91 is covalently cross-linked (Glycyl lysine isopeptide (Lys-Gly) (interchain with G-Cter in SUMO2)). An N6-acetyllysine mark is found at lysine 112, lysine 131, lysine 137, and lysine 161. The LIM zinc-binding 2 domain occupies 119–170 (CPRCSQAVYAAEKVIGAGKSWHKSCFRCAKCGKGLESTTLADKDGEIYCKGC). A Phosphoserine modification is found at serine 192.

As to quaternary structure, interacts with ASCC1; ASCC2 and TRIP4.

Its subcellular location is the nucleus. Could play a role in neuronal development. This chain is Cysteine and glycine-rich protein 1 (Csrp1), found in Mus musculus (Mouse).